The following is a 646-amino-acid chain: Preterminal protein (646 aa).

The Nuclear localization signal motif lies at 357–366 (RLPVRRRRRR). An O-(5'-phospho-DNA)-serine modification is found at Ser555. The tract at residues 619–646 (LHADVPLPPLQANPHPPLPPDARPQRTM) is disordered. The span at 624–640 (PLPPLQANPHPPLPPDA) shows a compositional bias: pro residues.

Belongs to the adenoviridae terminal protein family. As to quaternary structure, heterodimer with the polymerase; this heterodimer binds to bp 9 to 18 of the genome. Interacts with host POU2F1; POU2F1 binds to the auxiliary sequences in the inverted terminal repeats and tethers the pTP-POL heterodimer to the origin DNA thereby participating in the assembly of the pre-initiation complex (POL-TP-DBP-NFIA-POU2F1). Preterminal protein is used to replicate viral genome, upon genomic encapsidation it is processed first into iTP and finally into TP by adenovirus protease.

It is found in the host nucleus matrix. Its function is as follows. Protein covalently bound to the viral DNA that acts as a primer for viral genomic replication by DNA strand displacement. Assembles on the viral origin of replication in an initiation complex with viral polymerase, DBP, host NFIA and host POU2F1/OCT1. During initiation, the polymerase covalently couples the first dCTP with Ser-580 of pTP. The terminal protein stimulates the template activity over 20 fold compared to protein-free templates. Neo-synthesized viral genomes are linked to two preterminal proteins, one for each 5' end. These new genomes are encapsidated in the nucleus, and during capsid maturation by viral protease, preterminal protein is first cleaved into intermediary (iTP), then into mature TP. May play a role in host nuclear matrix localization of genomic DNA. This chain is Preterminal protein, found in Homo sapiens (Human).